A 248-amino-acid polypeptide reads, in one-letter code: tRNA (guanine-N(1)-)-methyltransferase (248 aa).

S-adenosyl-L-methionine contacts are provided by residues glycine 113 and 133-138 (IGDYVL).

The protein belongs to the RNA methyltransferase TrmD family. In terms of assembly, homodimer.

The protein localises to the cytoplasm. It catalyses the reaction guanosine(37) in tRNA + S-adenosyl-L-methionine = N(1)-methylguanosine(37) in tRNA + S-adenosyl-L-homocysteine + H(+). In terms of biological role, specifically methylates guanosine-37 in various tRNAs. The chain is tRNA (guanine-N(1)-)-methyltransferase from Shewanella baltica (strain OS223).